Here is a 391-residue protein sequence, read N- to C-terminus: Extracellular metalloproteinase 3 (391 aa).

The propeptide occupies 1 to 9 (HNVVDYVAS). Residue Asn173 is glycosylated (N-linked (GlcNAc...) asparagine). Residue His192 participates in Zn(2+) binding. Glu193 is a catalytic residue. Residue His196 participates in Zn(2+) binding. N-linked (GlcNAc...) asparagine glycosylation is found at Asn243 and Asn385.

It belongs to the peptidase M36 family. It depends on Zn(2+) as a cofactor.

It localises to the secreted. In terms of biological role, secreted metalloproteinase probably acting as a virulence factor. The sequence is that of Extracellular metalloproteinase 3 (MEP3) from Trichophyton soudanense.